The following is a 631-amino-acid chain: Phosphomethylpyrimidine synthase (631 aa).

Substrate-binding positions include Asn-239, Met-268, Tyr-297, His-333, 353–355 (SRG), 394–397 (DGLR), and Glu-433. His-437 lines the Zn(2+) pocket. Substrate is bound at residue Tyr-460. His-501 is a binding site for Zn(2+). [4Fe-4S] cluster is bound by residues Cys-581, Cys-584, and Cys-589.

Belongs to the ThiC family. As to quaternary structure, homodimer. [4Fe-4S] cluster serves as cofactor.

It carries out the reaction 5-amino-1-(5-phospho-beta-D-ribosyl)imidazole + S-adenosyl-L-methionine = 4-amino-2-methyl-5-(phosphooxymethyl)pyrimidine + CO + 5'-deoxyadenosine + formate + L-methionine + 3 H(+). The protein operates within cofactor biosynthesis; thiamine diphosphate biosynthesis. In terms of biological role, catalyzes the synthesis of the hydroxymethylpyrimidine phosphate (HMP-P) moiety of thiamine from aminoimidazole ribotide (AIR) in a radical S-adenosyl-L-methionine (SAM)-dependent reaction. This is Phosphomethylpyrimidine synthase from Ralstonia nicotianae (strain ATCC BAA-1114 / GMI1000) (Ralstonia solanacearum).